Here is a 239-residue protein sequence, read N- to C-terminus: Myogenic factor 6 (239 aa).

Residues 28 to 59 (PGVSPLYEGNDSPLSPGQDPVPSETGCESSGE) form a disordered region. Residues 92-143 (DRRKAATLRERRRLKKINEAFDALKKKTVPNPNQRLPKVEILRSAINYIEKL) enclose the bHLH domain. Polar residues predominate over residues 182-196 (CQSWQENPDHSSSQM). The tract at residues 182 to 239 (CQSWQENPDHSSSQMAGHREGAVLESSESSSLRRLSSIVDSISTEEPKARCPSQISEK) is disordered. The span at 204–223 (VLESSESSSLRRLSSIVDSI) shows a compositional bias: low complexity.

Efficient DNA binding requires dimerization with another bHLH protein.

Its subcellular location is the nucleus. Involved in muscle differentiation (myogenic factor). Induces fibroblasts to differentiate into myoblasts. Probable sequence specific DNA-binding protein. The sequence is that of Myogenic factor 6 (myf6) from Danio rerio (Zebrafish).